The chain runs to 279 residues: Protease HtpX homolog (279 aa).

A run of 2 helical transmembrane segments spans residues 6–26 (VFVL…ALGG) and 29–49 (GAIL…WGSS). His130 provides a ligand contact to Zn(2+). Residue Glu131 is part of the active site. His134 lines the Zn(2+) pocket. A run of 2 helical transmembrane segments spans residues 145–165 (IAAT…FFGG) and 176–196 (VAGI…QFAI). Glu201 is a Zn(2+) binding site.

This sequence belongs to the peptidase M48B family. The cofactor is Zn(2+).

The protein resides in the cell inner membrane. This is Protease HtpX homolog from Gemmatimonas aurantiaca (strain DSM 14586 / JCM 11422 / NBRC 100505 / T-27).